Here is a 540-residue protein sequence, read N- to C-terminus: Glucose-6-phosphate isomerase (540 aa).

The active-site Proton donor is Glu-346. Active-site residues include His-377 and Lys-505.

It belongs to the GPI family.

It is found in the cytoplasm. It carries out the reaction alpha-D-glucose 6-phosphate = beta-D-fructose 6-phosphate. Its pathway is carbohydrate biosynthesis; gluconeogenesis. It participates in carbohydrate degradation; glycolysis; D-glyceraldehyde 3-phosphate and glycerone phosphate from D-glucose: step 2/4. In terms of biological role, catalyzes the reversible isomerization of glucose-6-phosphate to fructose-6-phosphate. This Francisella tularensis subsp. holarctica (strain FTNF002-00 / FTA) protein is Glucose-6-phosphate isomerase.